The sequence spans 530 residues: Probable flavin-containing monooxygenase 1 (530 aa).

Residues 17-21 (GAGVS), Glu38, 46-47 (VW), and 58-59 (QS) contribute to the FAD site. 219 to 222 (SAID) contributes to the NADP(+) binding site.

Belongs to the FMO family. Requires FAD as cofactor.

In terms of biological role, required for the establishment of systemic acquired resistance (SAR). Not involved in local defense mechanisms. Confers a salicylic acid-dependent (SA) resistance to virulent pathogens such as P.syringae pv tomato and H.parasitica. This chain is Probable flavin-containing monooxygenase 1 (FMO1), found in Arabidopsis thaliana (Mouse-ear cress).